Here is a 501-residue protein sequence, read N- to C-terminus: Probable leucine aminopeptidase 2 (501 aa).

Positions 1–18 (MVTMKLLYLTSFASLAVA) are cleaved as a signal peptide. One can recognise a PA domain in the interval 119-216 (SPSVNATAPL…ADGQALIQMI (98 aa)). N-linked (GlcNAc...) asparagine glycosylation is found at Asn-123 and Asn-233. 2 residues coordinate Zn(2+): His-257 and Asp-269. Glu-301 serves as the catalytic Proton acceptor. Position 302 (Glu-302) interacts with Zn(2+). Asn-316 carries an N-linked (GlcNAc...) asparagine glycan. Asp-330 provides a ligand contact to Zn(2+). Residue Asn-350 is glycosylated (N-linked (GlcNAc...) asparagine). His-428 is a Zn(2+) binding site. Asn-433 and Asn-467 each carry an N-linked (GlcNAc...) asparagine glycan. Residues 480–501 (AMKRTPHTHTGGTGCYKDRVEQ) are disordered.

This sequence belongs to the peptidase M28 family. M28A subfamily. Monomer. Zn(2+) is required as a cofactor.

It localises to the secreted. Functionally, extracellular aminopeptidase that releases a wide variety of amino acids from natural peptides and contributes to pathogenicity. This Aspergillus fumigatus (strain ATCC MYA-4609 / CBS 101355 / FGSC A1100 / Af293) (Neosartorya fumigata) protein is Probable leucine aminopeptidase 2 (lap2).